The chain runs to 689 residues: MGTSQAVDSSPPDGTGVIQLDPWLEPFRDALKQRFSFIEGWVKAINETEGGLETFSKGYERFGLNVQSNGDIIYREWAPNAVQAQLVGEFNNWDVTAHPMTKNGFGVWEVTVPAVNGAPAIPHDSKIKISMVIPSGERIYRIPAWIKRVVQDLSVSPTYEAVFWNPPTEKQYKFQYSRPKRPESLRIYEAHVGISSPETKVATYKEFTSNMLPRIKYLGYNAIQLMAIMEHAYYASFGYQVNNFFAASSRYGTPEDLKELVDKAHSMGLVVLLDVVHSHASKNVLDGLNMFDGTDHLYFHGGGKGRHELWDSRLFNYGHHEVLRFLLSNLRFWMEEYGFDGFRFDGVTSMLYTHHGIGTGFSGGYHEYFGSSVDEEGVMYLTLANEMLHNLYPNCITVAEDVSGMPALCLPHSLGGVGFDYRLAMAVPDMYIKLLKEKKDDEWDIGNLSFTLTNRRHGEKTIAYAESHDQALVGDKTLMMWLCDKEMYTHMSVLTEFTPIIERGMALHKLIRLVTHGLGGEGYLNFEGNEFGHPEWLDFPRDGNNNSFWYARRQLNLTEDHLLRYKFLNDFDRAMQLTEEKYGWLHSPQAYVSLKNETDKVLVFERAGLLWIFNFHPTNSFTDYRVGVEQSGTYRIVLDTDDPAFGGLNRNLKETRFFTTDLSWNGRSNFLQVYIPTRTALVLALEETL.

Residues tryptophan 93 and lysine 128 each coordinate (1,4-alpha-D-glucosyl)n. Aspartate 345 acts as the Nucleophile in catalysis. Glutamate 400 functions as the Proton donor in the catalytic mechanism.

The protein belongs to the glycosyl hydrolase 13 family. GlgB subfamily.

Its subcellular location is the cytoplasm. The catalysed reaction is Transfers a segment of a (1-&gt;4)-alpha-D-glucan chain to a primary hydroxy group in a similar glucan chain.. The protein operates within glycan biosynthesis; glycogen biosynthesis. Its function is as follows. Glycogen-branching enzyme participates in the glycogen biosynthetic process along with glycogenin and glycogen synthase. Generates alpha-1,6-glucosidic branches from alpha-1,4-linked glucose chains, to increase solubility of the glycogen polymer. The sequence is that of 1,4-alpha-glucan-branching enzyme (gbeA) from Aspergillus oryzae (strain ATCC 42149 / RIB 40) (Yellow koji mold).